We begin with the raw amino-acid sequence, 274 residues long: Tryptophan synthase alpha chain (274 aa).

Catalysis depends on proton acceptor residues E49 and D60.

It belongs to the TrpA family. In terms of assembly, tetramer of two alpha and two beta chains.

It catalyses the reaction (1S,2R)-1-C-(indol-3-yl)glycerol 3-phosphate + L-serine = D-glyceraldehyde 3-phosphate + L-tryptophan + H2O. It functions in the pathway amino-acid biosynthesis; L-tryptophan biosynthesis; L-tryptophan from chorismate: step 5/5. In terms of biological role, the alpha subunit is responsible for the aldol cleavage of indoleglycerol phosphate to indole and glyceraldehyde 3-phosphate. This chain is Tryptophan synthase alpha chain, found in Gluconacetobacter diazotrophicus (strain ATCC 49037 / DSM 5601 / CCUG 37298 / CIP 103539 / LMG 7603 / PAl5).